We begin with the raw amino-acid sequence, 187 residues long: GTP cyclohydrolase 1 (187 aa).

Positions 81, 84, and 152 each coordinate Zn(2+).

Belongs to the GTP cyclohydrolase I family. As to quaternary structure, homomer.

The catalysed reaction is GTP + H2O = 7,8-dihydroneopterin 3'-triphosphate + formate + H(+). It participates in cofactor biosynthesis; 7,8-dihydroneopterin triphosphate biosynthesis; 7,8-dihydroneopterin triphosphate from GTP: step 1/1. The chain is GTP cyclohydrolase 1 from Pyrobaculum neutrophilum (strain DSM 2338 / JCM 9278 / NBRC 100436 / V24Sta) (Thermoproteus neutrophilus).